Reading from the N-terminus, the 168-residue chain is MISVIGIDPGSRNTGWGIVHEVSGVLHLVCCGVIQPSCNGSFAERLAHIFQEISSIIMKYKPVEASVEQVFTAQNPLTALKLGQARGAAVVACANQGLLIKDYEATTIKKTLVGHGRATKEQVSFMVGRSLGVKPDWPIDTSDALATAICHLTIRRFENRTARVAKTL.

Active-site residues include Asp8, Glu68, and Asp140. Residues Asp8, Glu68, and Asp140 each coordinate Mg(2+).

Belongs to the RuvC family. In terms of assembly, homodimer which binds Holliday junction (HJ) DNA. The HJ becomes 2-fold symmetrical on binding to RuvC with unstacked arms; it has a different conformation from HJ DNA in complex with RuvA. In the full resolvosome a probable DNA-RuvA(4)-RuvB(12)-RuvC(2) complex forms which resolves the HJ. Requires Mg(2+) as cofactor.

It localises to the cytoplasm. It catalyses the reaction Endonucleolytic cleavage at a junction such as a reciprocal single-stranded crossover between two homologous DNA duplexes (Holliday junction).. The RuvA-RuvB-RuvC complex processes Holliday junction (HJ) DNA during genetic recombination and DNA repair. Endonuclease that resolves HJ intermediates. Cleaves cruciform DNA by making single-stranded nicks across the HJ at symmetrical positions within the homologous arms, yielding a 5'-phosphate and a 3'-hydroxyl group; requires a central core of homology in the junction. The consensus cleavage sequence is 5'-(A/T)TT(C/G)-3'. Cleavage occurs on the 3'-side of the TT dinucleotide at the point of strand exchange. HJ branch migration catalyzed by RuvA-RuvB allows RuvC to scan DNA until it finds its consensus sequence, where it cleaves and resolves the cruciform DNA. In Lawsonia intracellularis (strain PHE/MN1-00), this protein is Crossover junction endodeoxyribonuclease RuvC.